Consider the following 583-residue polypeptide: Proline--tRNA ligase (583 aa).

It belongs to the class-II aminoacyl-tRNA synthetase family. ProS type 1 subfamily. As to quaternary structure, homodimer.

Its subcellular location is the cytoplasm. The enzyme catalyses tRNA(Pro) + L-proline + ATP = L-prolyl-tRNA(Pro) + AMP + diphosphate. Its function is as follows. Catalyzes the attachment of proline to tRNA(Pro) in a two-step reaction: proline is first activated by ATP to form Pro-AMP and then transferred to the acceptor end of tRNA(Pro). As ProRS can inadvertently accommodate and process non-cognate amino acids such as alanine and cysteine, to avoid such errors it has two additional distinct editing activities against alanine. One activity is designated as 'pretransfer' editing and involves the tRNA(Pro)-independent hydrolysis of activated Ala-AMP. The other activity is designated 'posttransfer' editing and involves deacylation of mischarged Ala-tRNA(Pro). The misacylated Cys-tRNA(Pro) is not edited by ProRS. In Acidothermus cellulolyticus (strain ATCC 43068 / DSM 8971 / 11B), this protein is Proline--tRNA ligase.